The sequence spans 210 residues: Tumor protein D53 homolog (210 aa).

Positions 22 to 73 (VTDVDFTSMISEEEKEELKAELAKLEDEISTLRQVLAAKEKHLIEIKQKLGM) form a coiled coil. Residues 185–197 (SSTAHASAQSSLA) are compositionally biased toward polar residues. The segment at 185–210 (SSTAHASAQSSLAGTRLPESEEELQC) is disordered.

This sequence belongs to the TPD52 family. As to quaternary structure, forms a homodimer or heterodimer with other members of the family.

The polypeptide is Tumor protein D53 homolog (TPD52L1) (Gallus gallus (Chicken)).